Here is a 419-residue protein sequence, read N- to C-terminus: Ras association domain-containing protein 8 (419 aa).

The Ras-associating domain occupies 1–82 (MELKVWVDGV…VQLILRRTGP (82 aa)). Ser-105 and Ser-129 each carry phosphoserine. Thr-131 bears the Phosphothreonine mark. The interval 372–399 (ASQADIETEAPFQSGSLKRPGSSRQLPS) is disordered. Residues 382–399 (PFQSGSLKRPGSSRQLPS) show a composition bias toward polar residues. Ser-387 is modified (phosphoserine).

The protein is Ras association domain-containing protein 8 (Rassf8) of Mus musculus (Mouse).